Here is a 135-residue protein sequence, read N- to C-terminus: Galectin-1 (135 aa).

Position 2 is an N-acetylalanine (Ala-2). In terms of domain architecture, Galectin spans 4–135 (GLVASNLNLK…DFKIKCVAFD (132 aa)). Lys-13 and Lys-29 each carry N6-acetyllysine. Ser-30 bears the Phosphoserine mark. A beta-D-galactoside is bound by residues 45–49 (HFNPR), His-53, Asn-62, and 69–72 (WGAE). Lys-108 is subject to N6-acetyllysine; alternate. Lys-108 carries the N6-succinyllysine; alternate modification. Lys-128 carries the post-translational modification N6-acetyllysine.

In terms of assembly, homodimer. Binds LGALS3BP. Interacts with CD2, CD3, CD4, CD6, CD7, CD43, ALCAM and CD45. Interacts with laminin (via poly-N-acetyllactosamine). Interacts with SUSD2. Interacts with cargo receptor TMED10; the interaction mediates the translocation from the cytoplasm into the ERGIC (endoplasmic reticulum-Golgi intermediate compartment) and thereby secretion. The N-terminus is blocked.

It localises to the secreted. The protein localises to the extracellular space. It is found in the extracellular matrix. Its subcellular location is the cytoplasm. Lectin that binds beta-galactoside and a wide array of complex carbohydrates. Plays a role in regulating apoptosis, cell proliferation and cell differentiation. Inhibits CD45 protein phosphatase activity and therefore the dephosphorylation of Lyn kinase. Strong inducer of T-cell apoptosis. The protein is Galectin-1 of Bubalus bubalis (Domestic water buffalo).